Reading from the N-terminus, the 505-residue chain is ATP synthase subunit alpha (505 aa).

169–176 provides a ligand contact to ATP; it reads GDRKTGKT.

This sequence belongs to the ATPase alpha/beta chains family. As to quaternary structure, F-type ATPases have 2 components, CF(1) - the catalytic core - and CF(0) - the membrane proton channel. CF(1) has five subunits: alpha(3), beta(3), gamma(1), delta(1), epsilon(1). CF(0) has three main subunits: a(1), b(2) and c(9-12). The alpha and beta chains form an alternating ring which encloses part of the gamma chain. CF(1) is attached to CF(0) by a central stalk formed by the gamma and epsilon chains, while a peripheral stalk is formed by the delta and b chains.

Its subcellular location is the cell membrane. The catalysed reaction is ATP + H2O + 4 H(+)(in) = ADP + phosphate + 5 H(+)(out). Its function is as follows. Produces ATP from ADP in the presence of a proton gradient across the membrane. The alpha chain is a regulatory subunit. This Leuconostoc mesenteroides subsp. mesenteroides (strain ATCC 8293 / DSM 20343 / BCRC 11652 / CCM 1803 / JCM 6124 / NCDO 523 / NBRC 100496 / NCIMB 8023 / NCTC 12954 / NRRL B-1118 / 37Y) protein is ATP synthase subunit alpha.